The following is a 692-amino-acid chain: Potassium-transporting ATPase ATP-binding subunit (692 aa).

4 helical membrane-spanning segments follow: residues 50 to 70 (PIMFVVEIGFIITFILSFLPS), 77 to 97 (GWFNITVSLILLFTVLFANFA), 240 to 260 (LTLIFLIVVVTLPIFTNYLGF), and 266 to 286 (VLVALLVCLIPTTIGGLLSAI). The active-site 4-aspartylphosphate intermediate is aspartate 319. Residues aspartate 356, glutamate 360, 388–395 (FKAETRMS), and lysine 407 contribute to the ATP site. Residues aspartate 530 and aspartate 534 each contribute to the Mg(2+) site. Transmembrane regions (helical) follow at residues 600 to 620 (FAIIPAMFTLAIPQMEALNIM), 628 to 648 (AILSALIFNAVIIPLLIPLAM), and 672 to 692 (GGVIVPFIGIKVIDIIVGLFI).

The protein belongs to the cation transport ATPase (P-type) (TC 3.A.3) family. Type IA subfamily. In terms of assembly, the system is composed of three essential subunits: KdpA, KdpB and KdpC.

The protein resides in the cell membrane. It catalyses the reaction K(+)(out) + ATP + H2O = K(+)(in) + ADP + phosphate + H(+). Functionally, part of the high-affinity ATP-driven potassium transport (or Kdp) system, which catalyzes the hydrolysis of ATP coupled with the electrogenic transport of potassium into the cytoplasm. This subunit is responsible for energy coupling to the transport system and for the release of the potassium ions to the cytoplasm. This chain is Potassium-transporting ATPase ATP-binding subunit, found in Bacillus cereus (strain 03BB102).